We begin with the raw amino-acid sequence, 805 residues long: MVKGRKSQKADKVTKAKKRVADEVDESESEPELQVEGLIDAEAESEDDESFESAEENASAEEDEEDEEDEEDSDAELNKLLAEEEGDDSESEYNTSDFSEDDTKSMTDKLSGVKLTTIAEPIIKTKFSDGTPRVIKPEINPVYDSDDSDIESKNTIGNIPLSVYDEMPHIGYDVNGKRIMRPARASALDQLLDTIELPEGWTGLLDKESGASLNISKEELELISKIQRNEQTDESTNPYEPLIDWFTRHEEVMPLSAAPEPKRRFVPSKNEAKRIMKIVKAIREGRIIPPKKMKELREKEKSEDFNYDLWGDSTETNDHIMNLRAPKLPPPTNEESYNPPAEYLPTEEEIKEWENTEYSERERNFVPKKYDSLRKVPGYTESVRERFERSLDLYLAPRMRKNKLNIDPESLIPELPSPKDLRPFPIRCSTIYSGHEGKIRTLSIDPTGIWLATGSDDGSVRIWEILTGREVYRVQLVNKEDNPEDNIHSVEWNPDGSVGILAVAVGNNIFLIVPPIFGYDIENAGKVRIEHGFGYDTFGSTKKANLEVNGSDLESDDEAANANTAVKKQVAQWHKPTQRQMEQDICIVIVCKKPVKKLSWHRKGDYFVTVQPDSGNTSVLIHQLSKHLTQSPFRKSKGIIMDAKFHPFKPQLFVCSQRYVRIYDLSQQVLVKKLLPGARWLSNIDIHPRGDNLIASSYDKRVLWHDLDLAATPYKTLRYHDKAVRSTTFHKKLPLFCSAADDGFIHIFHATVYDDMMKNPMIVPLKKLTGHKVQGHLGVLDTIWHPKEAWLFSAGADNTARMWTT.

Residues 1-105 (MVKGRKSQKA…SDFSEDDTKS (105 aa)) form a disordered region. Positions 8–22 (QKADKVTKAKKRVAD) are enriched in basic and acidic residues. Residues 23–75 (EVDESESEPELQVEGLIDAEAESEDDESFESAEENASAEEDEEDEEDEEDSDA) show a composition bias toward acidic residues. Positions 264–382 (RFVPSKNEAK…LRKVPGYTES (119 aa)) are required for interaction with NOP7. The interval 382–418 (SVRERFERSLDLYLAPRMRKNKLNIDPESLIPELPSP) is required for interaction with YTM1. WD repeat units follow at residues 434 to 473 (GHEG…EVYR), 482 to 522 (NPED…YDIE), 590 to 632 (VCKK…TQSP), 635 to 673 (KSKG…LVKK), 676 to 715 (PGAR…TPYK), 719 to 758 (YHDK…DMMK), and 775 to 805 (GHLG…MWTT).

Belongs to the WD repeat BOP1/ERB1 family. As to quaternary structure, component of the NOP7 complex, composed of ERB1, NOP7 and YTM1. The complex is held together by ERB1, which interacts with NOP7 via its N-terminal domain and with YTM1 via a high-affinity interaction between the seven-bladed beta-propeller domains of the 2 proteins. The NOP7 complex associates with the 66S pre-ribosome.

It localises to the nucleus. The protein resides in the nucleolus. Its subcellular location is the nucleoplasm. Functionally, component of the NOP7 complex, which is required for maturation of the 25S and 5.8S ribosomal RNAs and formation of the 60S ribosome. This chain is Ribosome biogenesis protein ERB1, found in Candida glabrata (strain ATCC 2001 / BCRC 20586 / JCM 3761 / NBRC 0622 / NRRL Y-65 / CBS 138) (Yeast).